A 1159-amino-acid polypeptide reads, in one-letter code: Reverse gyrase 2 (1159 aa).

Residues 1 to 40 form an RG N-terminal-type zinc finger; the sequence is MALELIERGCPNCGGVISSDRLEKGLPCSKCLPKPTEEKV. Residues C10, C13, C28, and C31 each coordinate Zn(2+). Residues Q82 and 99 to 106 each bind ATP; that span reads APTGVGKT. The 190-residue stretch at 86-275 folds into the Helicase ATP-binding domain; that stretch reads AKRVFMNQSF…LFRNLLGFDV (190 aa). Residues 196-199 carry the DEAD box motif; the sequence is DDID. The tract at residues 583–1159 is topoisomerase I; it reads DLFKTTLVIV…LLKEEKAFKK (577 aa). The 157-residue stretch at 587–743 folds into the Toprim domain; that stretch reads TTLVIVESPN…NIKRAEFHEV (157 aa). Mg(2+) contacts are provided by E593 and D712. The Topo IA-type catalytic domain occupies 759–1152; it reads DLNLVKAQLV…EVHRIKVLLK (394 aa). Y902 acts as the O-(5'-phospho-DNA)-tyrosine intermediate in catalysis.

It in the N-terminal section; belongs to the DEAD box helicase family. DDVD subfamily. This sequence in the C-terminal section; belongs to the type IA topoisomerase family. In terms of assembly, monomer. Zn(2+) is required as a cofactor. It depends on Mg(2+) as a cofactor.

It localises to the cytoplasm. It carries out the reaction ATP + H2O = ADP + phosphate + H(+). In terms of biological role, modifies the topological state of DNA by introducing positive supercoils in an ATP-dependent process, increasing the linking number in steps of +1. Binds to single-stranded DNA, transiently cleaves and then rejoins the ends, introducing a positive supercoil in the process. The scissile phosphodiester is attacked by the catalytic tyrosine of the enzyme, resulting in the formation of a DNA-(5'-phosphotyrosyl)-enzyme intermediate. Probably involved in rewinding DNA strands in regions of the chromosome that have opened up to allow replication, transcription, DNA repair and/or for DNA protection. This Aquifex aeolicus (strain VF5) protein is Reverse gyrase 2.